The chain runs to 1388 residues: DNA-directed RNA polymerase subunit beta (1388 aa).

Belongs to the RNA polymerase beta chain family. As to quaternary structure, the RNAP catalytic core consists of 2 alpha, 1 beta, 1 beta' and 1 omega subunit. When a sigma factor is associated with the core the holoenzyme is formed, which can initiate transcription.

The catalysed reaction is RNA(n) + a ribonucleoside 5'-triphosphate = RNA(n+1) + diphosphate. In terms of biological role, DNA-dependent RNA polymerase catalyzes the transcription of DNA into RNA using the four ribonucleoside triphosphates as substrates. This Stenotrophomonas maltophilia (strain K279a) protein is DNA-directed RNA polymerase subunit beta.